The following is a 628-amino-acid chain: Chaperone protein HtpG (628 aa).

The a; substrate-binding stretch occupies residues 1–333; that stretch reads MTTDTKATET…SADLPLNVSR (333 aa). Residues 334–549 form a b region; the sequence is EMIQESPLLA…EHGPDRQFER (216 aa). Residues 550–628 are c; it reads LMNAAGRLDK…RLIARGIAKG (79 aa).

Belongs to the heat shock protein 90 family. In terms of assembly, homodimer.

Its subcellular location is the cytoplasm. Functionally, molecular chaperone. Has ATPase activity. The sequence is that of Chaperone protein HtpG from Mesorhizobium japonicum (strain LMG 29417 / CECT 9101 / MAFF 303099) (Mesorhizobium loti (strain MAFF 303099)).